A 586-amino-acid polypeptide reads, in one-letter code: Ezrin (586 aa).

The FERM domain maps to 2-295 (PKPINVRVTT…GNHELYMRRR (294 aa)). An N6-acetyllysine modification is found at lysine 60. The short motif at 115 to 120 (IYCPPE) is the [IL]-x-C-x-x-[DE] motif element. Phosphotyrosine; by PDGFR is present on tyrosine 146. An interaction with SCYL3 region spans residues 244-586 (EIRNISFNDK…KQRIDEFEAM (343 aa)). Residues 302–462 (VQQMKAQARE…QDDLVKTKEE (161 aa)) are a coiled coil. The tract at residues 306 to 338 (KAQAREEKHQKQLERQQLETEKKRRETVEREKE) is disordered. A compositionally biased stretch (basic and acidic residues) spans 308-338 (QAREEKHQKQLERQQLETEKKRRETVEREKE). Serine 366 is modified (phosphoserine). At tyrosine 478 the chain carries Phosphotyrosine. At serine 535 the chain carries Phosphoserine. Threonine 567 bears the Phosphothreonine; by ROCK2 and PKC/PRKCI mark.

Interacts with PODXL and NHERF2. Found in a complex with EZR, PODXL and NHERF2. Interacts with PALS1. Interacts with MCC, PLEKHG6, SCYL3/PACE1, NHERF1 and TMEM8B. Interacts (when phosphorylated) with FES/FPS. Interacts with dimeric S100P, the interaction may be activating through unmasking of F-actin binding sites. Identified in complexes that contain VIM, EZR, AHNAK, BFSP1, BFSP2, ANK2, PLEC, PRX and spectrin. Detected in a complex composed of at least EZR, AHNAK, PPL and PRX. Interacts with PDPN (via cytoplasmic domain); activates RHOA and promotes epithelial-mesenchymal transition. Interacts with SPN/CD43 cytoplasmic tail, CD44 and ICAM2. Interacts with SLC9A3; interaction targets SLC9A3 to the apical membrane. Interacts with SLC9A1; regulates interactions of SLC9A1 with cytoskeletal and promotes stress fiber formation. Interacts with CLIC5; may work together in a complex which also includes RDX and MYO6 to stabilize linkages between the plasma membrane and subjacent actin cytoskeleton at the base of stereocilia. Phosphorylated by tyrosine-protein kinases. Phosphorylation by ROCK2 suppresses the head-to-tail association of the N-terminal and C-terminal halves resulting in an opened conformation which is capable of actin and membrane-binding. Post-translationally, S-nitrosylation is induced by interferon-gamma and oxidatively-modified low-densitity lipoprotein (LDL(ox)) possibly implicating the iNOS-S100A8/9 transnitrosylase complex. In terms of tissue distribution, glomerular epithelium cell (podocyte). Expressed in cerebrum, cerebellum and hippocampus (at protein level). Expressed in the small intestine, lung, kidney and ovaries.

Its subcellular location is the apical cell membrane. The protein resides in the cell projection. It localises to the microvillus membrane. The protein localises to the ruffle membrane. It is found in the cytoplasm. Its subcellular location is the cell cortex. The protein resides in the cytoskeleton. It localises to the microvillus. Its activity is regulated as follows. A head-to-tail association, of the N-terminal and C-terminal halves results in a closed conformation (inactive form) which is incapable of actin or membrane-binding. Probably involved in connections of major cytoskeletal structures to the plasma membrane. In epithelial cells, required for the formation of microvilli and membrane ruffles on the apical pole. Along with PLEKHG6, required for normal macropinocytosis. In Rattus norvegicus (Rat), this protein is Ezrin (Ezr).